A 218-amino-acid chain; its full sequence is Superoxide dismutase [Mn], mitochondrial (218 aa).

Positions 27, 84, 174, and 178 each coordinate Mn(2+).

This sequence belongs to the iron/manganese superoxide dismutase family. In terms of assembly, homotetramer. Mn(2+) serves as cofactor.

It localises to the mitochondrion matrix. It catalyses the reaction 2 superoxide + 2 H(+) = H2O2 + O2. Destroys superoxide anion radicals which are normally produced within the cells and which are toxic to biological systems. The sequence is that of Superoxide dismutase [Mn], mitochondrial (SODA) from Chlamydomonas reinhardtii (Chlamydomonas smithii).